Reading from the N-terminus, the 231-residue chain is ATP phosphoribosyltransferase (231 aa).

It belongs to the ATP phosphoribosyltransferase family. Short subfamily. In terms of assembly, heteromultimer composed of HisG and HisZ subunits.

The protein localises to the cytoplasm. It catalyses the reaction 1-(5-phospho-beta-D-ribosyl)-ATP + diphosphate = 5-phospho-alpha-D-ribose 1-diphosphate + ATP. The protein operates within amino-acid biosynthesis; L-histidine biosynthesis; L-histidine from 5-phospho-alpha-D-ribose 1-diphosphate: step 1/9. Functionally, catalyzes the condensation of ATP and 5-phosphoribose 1-diphosphate to form N'-(5'-phosphoribosyl)-ATP (PR-ATP). Has a crucial role in the pathway because the rate of histidine biosynthesis seems to be controlled primarily by regulation of HisG enzymatic activity. The sequence is that of ATP phosphoribosyltransferase from Brucella melitensis biotype 2 (strain ATCC 23457).